The chain runs to 560 residues: E3 SUMO-protein ligase CBX4 (560 aa).

An involved in interaction with H3C15 and H3C1 region spans residues 1-75 (MELPAVGEHV…LMGYRKRGPK (75 aa)). The segment at 1–539 (MELPAVGEHV…LSEFKPFFGN (539 aa)) is interaction with BMI1. The region spanning 11-69 (FAVESIEKKRIRKGRVEYLVKWRGWSPKYNTWEPEENILDPRLLIAFQNRERQEQLMGY) is the Chromo domain. Residues Lys77, Lys106, Lys114, and Lys125 each participate in a glycyl lysine isopeptide (Lys-Gly) (interchain with G-Cter in SUMO2) cross-link. The interval 92-152 (VLTGLQDSST…PPGKSGKYYY (61 aa)) is disordered. Position 149 is an N6-acetyllysine; alternate (Lys149). Residue Lys149 forms a Glycyl lysine isopeptide (Lys-Gly) (interchain with G-Cter in SUMO2); alternate linkage. Glycyl lysine isopeptide (Lys-Gly) (interchain with G-Cter in SUMO2) cross-links involve residues Lys157, Lys167, and Lys178. Phosphoserine is present on Ser182. Glycyl lysine isopeptide (Lys-Gly) (interchain with G-Cter in SUMO2) cross-links involve residues Lys191, Lys205, Lys212, Lys223, Lys249, Lys268, Lys278, and Lys280. The interval 217–243 (AAGAPGKGSEKGPPNGMMPAPKEAVTG) is disordered. Composition is skewed to basic and acidic residues over residues 281 to 291 (SGEVAEGEARS) and 298 to 331 (AADE…REEE). Residues 281–404 (SGEVAEGEAR…HHHHHHAVGL (124 aa)) form a disordered region. Residues Lys320, Lys352, and Lys365 each participate in a glycyl lysine isopeptide (Lys-Gly) (interchain with G-Cter in SUMO2) cross-link. A compositionally biased stretch (basic residues) spans 380–401 (PSHHPHPHPHHHHHHHHHHHHA). The residue at position 467 (Ser467) is a Phosphoserine. A Glycyl lysine isopeptide (Lys-Gly) (interchain with G-Cter in SUMO2); alternate cross-link involves residue Lys494. A Glycyl lysine isopeptide (Lys-Gly) (interchain with G-Cter in SUMO); alternate cross-link involves residue Lys494. Phosphothreonine; by HIPK2 is present on Thr497. Positions 509–521 (AAPTTTAEKPPAE) are enriched in low complexity. The tract at residues 509–528 (AAPTTTAEKPPAEAQDEPAE) is disordered. Residues 531–556 (SEFKPFFGNIIITDVTANCLTVTFKE) are involved in interaction with H3C15 and RNF2. The interval 540 to 560 (IIITDVTANCLTVTFKEYVTV) is interaction with RNF2.

In terms of assembly, interacts with histone H3-K9Me3. Interacts with CHTOP. Component of a PRC1-like complex. The composition of the PRC1 complex differs between the PRC1 complex in pluripotent embryonic stem cells containing RNF2, CBX7 and PCGF2, and the PRC1 complex in differentiating cells containing RNF2, CBX2, CBX4 and BMI1. Self-associates. Interacts with SUV39H1 and HIPK2. Interacts with CSNK2B. May interact with H3C15, H3C1 and RNF2. Interacts with SUMO1P1/SUMO5. Interacts with PRDM1/Blimp-1. In terms of processing, ubiquitinated. Ubiquitination regulates the function of the Polycomb group (PcG) multiprotein PRC1-like complex. Deubiquitinated by USP26. Phosphorylated on Thr-497 by HIPK2 upon DNA damage. This phosphorylation stimulates E3 SUMO-protein ligase activity and promotes sumoylation on Lys-494, as well as sumoylation of other target proteins, such as HNRNPK. As to expression, ubiquitous.

It is found in the nucleus. The protein resides in the nucleus speckle. It functions in the pathway protein modification; protein sumoylation. Functionally, E3 SUMO-protein ligase that catalyzes sumoylation of target proteins by promoting the transfer of SUMO from the E2 enzyme to the substrate. Involved in the sumoylation of HNRNPK, a p53/TP53 transcriptional coactivator, hence indirectly regulates p53/TP53 transcriptional activation resulting in p21/CDKN1A expression. Monosumoylates ZNF131. Component of a Polycomb group (PcG) multiprotein PRC1-like complex, a complex class required to maintain the transcriptionally repressive state of many genes, including Hox genes, throughout development. PcG PRC1 complex acts via chromatin remodeling and modification of histones; it mediates monoubiquitination of histone H2A 'Lys-119', rendering chromatin heritably changed in its expressibility. Binds to histone H3 trimethylated at 'Lys-9' (H3K9me3). Plays a role in the lineage differentiation of the germ layers in embryonic development. This chain is E3 SUMO-protein ligase CBX4 (CBX4), found in Homo sapiens (Human).